Consider the following 84-residue polypeptide: Short neurotoxin SNTX-1 (84 aa).

Residues 1 to 21 (MKTLLLILVVVTIVCLDLVCC) form the signal peptide. 4 disulfides stabilise this stretch: C25–C46, C39–C63, C65–C76, and C77–C82.

The protein belongs to the three-finger toxin family. Short-chain subfamily. Type I alpha-neurotoxin sub-subfamily. Expressed by the venom gland.

It localises to the secreted. Its function is as follows. Binds to muscle nicotinic acetylcholine receptor (nAChR) and inhibit acetylcholine from binding to the receptor, thereby impairing neuromuscular transmission. This chain is Short neurotoxin SNTX-1, found in Demansia vestigiata (Lesser black whip snake).